A 448-amino-acid polypeptide reads, in one-letter code: Asparagine--tRNA ligase (448 aa).

This sequence belongs to the class-II aminoacyl-tRNA synthetase family. Homodimer.

It localises to the cytoplasm. The catalysed reaction is tRNA(Asn) + L-asparagine + ATP = L-asparaginyl-tRNA(Asn) + AMP + diphosphate + H(+). This Streptococcus thermophilus (strain ATCC BAA-250 / LMG 18311) protein is Asparagine--tRNA ligase.